A 453-amino-acid chain; its full sequence is DNA repair protein RadA (453 aa).

A C4-type zinc finger spans residues 11–28 (CNQCGATAPKWLGQCPGC). Residue 93-100 (GDPGIGKS) coordinates ATP. The short motif at 250–254 (KNRFG) is the RadA KNRFG motif element. A lon-protease-like region spans residues 349 to 453 (DVFLSITGGL…TIKDAIRLLL (105 aa)).

It belongs to the RecA family. RadA subfamily.

In terms of biological role, DNA-dependent ATPase involved in processing of recombination intermediates, plays a role in repairing DNA breaks. Stimulates the branch migration of RecA-mediated strand transfer reactions, allowing the 3' invading strand to extend heteroduplex DNA faster. Binds ssDNA in the presence of ADP but not other nucleotides, has ATPase activity that is stimulated by ssDNA and various branched DNA structures, but inhibited by SSB. Does not have RecA's homology-searching function. The sequence is that of DNA repair protein RadA from Chlamydia pneumoniae (Chlamydophila pneumoniae).